We begin with the raw amino-acid sequence, 112 residues long: Reprimo-like protein (112 aa).

Residues valine 59 to leucine 79 traverse the membrane as a helical segment.

The protein belongs to the reprimo family.

It localises to the membrane. The sequence is that of Reprimo-like protein (rprml) from Xenopus laevis (African clawed frog).